Consider the following 197-residue polypeptide: RNA-binding protein Rsf1 (197 aa).

The 74-residue stretch at 7-80 folds into the RRM domain; sequence TRVYVGNLTD…SQLRVEISKG (74 aa). Residues 74–197 form a disordered region; the sequence is RVEISKGRPR…SRSPVGNHRF (124 aa). A compositionally biased stretch (basic and acidic residues) spans 89 to 102; it reads GPMDRGGRRGDFGR. Thr-106 carries the post-translational modification Phosphothreonine. 2 stretches are compositionally biased toward low complexity: residues 117–144 and 166–176; these read QRGS…SYNG and RYSSGSSASYG. Phosphoserine is present on residues Ser-168, Ser-171, Ser-174, Ser-188, and Ser-190.

It belongs to the splicing factor SR family. Post-translationally, extensively phosphorylated on serine residues in the RS domain.

It is found in the nucleus. Functionally, may control important aspects of development. In Drosophila melanogaster (Fruit fly), this protein is RNA-binding protein Rsf1 (Rsf1).